The sequence spans 274 residues: Octanoyl-[GcvH]:protein N-octanoyltransferase (274 aa).

Residues 37–242 form the BPL/LPL catalytic domain; the sequence is QGNDAVVRTW…AMKTLGATLS (206 aa). The active-site Acyl-thioester intermediate is Cys-141.

The protein belongs to the octanoyltransferase LipL family.

It carries out the reaction N(6)-octanoyl-L-lysyl-[glycine-cleavage complex H protein] + L-lysyl-[lipoyl-carrier protein] = N(6)-octanoyl-L-lysyl-[lipoyl-carrier protein] + L-lysyl-[glycine-cleavage complex H protein]. It functions in the pathway protein modification; protein lipoylation via endogenous pathway; protein N(6)-(lipoyl)lysine from octanoyl-[acyl-carrier-protein]. Catalyzes the amidotransfer (transamidation) of the octanoyl moiety from octanoyl-GcvH to the lipoyl domain of the E2 subunit of lipoate-dependent enzymes. In Macrococcus caseolyticus (strain JCSC5402) (Macrococcoides caseolyticum), this protein is Octanoyl-[GcvH]:protein N-octanoyltransferase.